Consider the following 37-residue polypeptide: Cytochrome b6-f complex subunit 5 (37 aa).

Residues I5–A25 form a helical membrane-spanning segment.

Belongs to the PetG family. The 4 large subunits of the cytochrome b6-f complex are cytochrome b6, subunit IV (17 kDa polypeptide, PetD), cytochrome f and the Rieske protein, while the 4 small subunits are PetG, PetL, PetM and PetN. The complex functions as a dimer.

The protein localises to the cellular thylakoid membrane. Its function is as follows. Component of the cytochrome b6-f complex, which mediates electron transfer between photosystem II (PSII) and photosystem I (PSI), cyclic electron flow around PSI, and state transitions. PetG is required for either the stability or assembly of the cytochrome b6-f complex. The polypeptide is Cytochrome b6-f complex subunit 5 (Synechococcus sp. (strain JA-2-3B'a(2-13)) (Cyanobacteria bacterium Yellowstone B-Prime)).